We begin with the raw amino-acid sequence, 248 residues long: PF03932 family protein CutC (248 aa).

Belongs to the CutC family. As to quaternary structure, homodimer.

The protein resides in the cytoplasm. The chain is PF03932 family protein CutC from Salmonella enteritidis PT4 (strain P125109).